Consider the following 471-residue polypeptide: Ribulose bisphosphate carboxylase large chain (471 aa).

Residue lysine 5 is modified to N6,N6,N6-trimethyllysine. 2 residues coordinate substrate: asparagine 114 and threonine 164. The active-site Proton acceptor is lysine 166. Lysine 168 contacts substrate. Lysine 192, aspartate 194, and glutamate 195 together coordinate Mg(2+). At lysine 192 the chain carries N6-carboxylysine. Histidine 285 serves as the catalytic Proton acceptor. Substrate-binding residues include arginine 286, histidine 318, and serine 370.

It belongs to the RuBisCO large chain family. Type I subfamily. In terms of assembly, heterohexadecamer of 8 large chains and 8 small chains; disulfide-linked. The disulfide link is formed within the large subunit homodimers. Mg(2+) is required as a cofactor. The disulfide bond which can form in the large chain dimeric partners within the hexadecamer appears to be associated with oxidative stress and protein turnover.

Its subcellular location is the plastid. The protein resides in the chloroplast. It catalyses the reaction 2 (2R)-3-phosphoglycerate + 2 H(+) = D-ribulose 1,5-bisphosphate + CO2 + H2O. The catalysed reaction is D-ribulose 1,5-bisphosphate + O2 = 2-phosphoglycolate + (2R)-3-phosphoglycerate + 2 H(+). RuBisCO catalyzes two reactions: the carboxylation of D-ribulose 1,5-bisphosphate, the primary event in carbon dioxide fixation, as well as the oxidative fragmentation of the pentose substrate in the photorespiration process. Both reactions occur simultaneously and in competition at the same active site. In Anthocleista grandiflora (Forest fever tree), this protein is Ribulose bisphosphate carboxylase large chain.